Reading from the N-terminus, the 314-residue chain is Ribosomal protein L11 methyltransferase (314 aa).

Thr166, Gly187, Asp209, and Asn251 together coordinate S-adenosyl-L-methionine.

This sequence belongs to the methyltransferase superfamily. PrmA family.

The protein resides in the cytoplasm. The catalysed reaction is L-lysyl-[protein] + 3 S-adenosyl-L-methionine = N(6),N(6),N(6)-trimethyl-L-lysyl-[protein] + 3 S-adenosyl-L-homocysteine + 3 H(+). Functionally, methylates ribosomal protein L11. The polypeptide is Ribosomal protein L11 methyltransferase (Clostridium tetani (strain Massachusetts / E88)).